The primary structure comprises 400 residues: Chorismate synthase (400 aa).

The NADP(+) site is built by R40 and R46. Residues 135–137 (RAS), 257–258 (QA), G301, 316–320 (KPIST), and R342 contribute to the FMN site.

This sequence belongs to the chorismate synthase family. As to quaternary structure, homotetramer. The cofactor is FMNH2.

It catalyses the reaction 5-O-(1-carboxyvinyl)-3-phosphoshikimate = chorismate + phosphate. It functions in the pathway metabolic intermediate biosynthesis; chorismate biosynthesis; chorismate from D-erythrose 4-phosphate and phosphoenolpyruvate: step 7/7. Functionally, catalyzes the anti-1,4-elimination of the C-3 phosphate and the C-6 proR hydrogen from 5-enolpyruvylshikimate-3-phosphate (EPSP) to yield chorismate, which is the branch point compound that serves as the starting substrate for the three terminal pathways of aromatic amino acid biosynthesis. This reaction introduces a second double bond into the aromatic ring system. This Tropheryma whipplei (strain TW08/27) (Whipple's bacillus) protein is Chorismate synthase.